The primary structure comprises 152 residues: Putative pre-16S rRNA nuclease (152 aa).

The protein belongs to the YqgF nuclease family.

It localises to the cytoplasm. In terms of biological role, could be a nuclease involved in processing of the 5'-end of pre-16S rRNA. In Sphingopyxis alaskensis (strain DSM 13593 / LMG 18877 / RB2256) (Sphingomonas alaskensis), this protein is Putative pre-16S rRNA nuclease.